Reading from the N-terminus, the 496-residue chain is Alanine aminotransferase 1 (496 aa).

At Ala-2 the chain carries N-acetylalanine. Residue Thr-22 is modified to Phosphothreonine. An N6-(pyridoxal phosphate)lysine modification is found at Lys-314.

Belongs to the class-I pyridoxal-phosphate-dependent aminotransferase family. Alanine aminotransferase subfamily. As to quaternary structure, homodimer. Requires pyridoxal 5'-phosphate as cofactor.

The protein resides in the cytoplasm. The catalysed reaction is L-alanine + 2-oxoglutarate = pyruvate + L-glutamate. It functions in the pathway amino-acid degradation; L-alanine degradation via transaminase pathway; pyruvate from L-alanine: step 1/1. Its function is as follows. Catalyzes the reversible transamination between alanine and 2-oxoglutarate to form pyruvate and glutamate. Participates in cellular nitrogen metabolism and also in liver gluconeogenesis starting with precursors transported from skeletal muscles. The polypeptide is Alanine aminotransferase 1 (GPT) (Bos taurus (Bovine)).